A 190-amino-acid chain; its full sequence is Thiamine biosynthesis protein X (190 aa).

The N-terminal stretch at 1 to 22 is a signal peptide; that stretch reads MSISRTVFGIAATAALSAALVA. The N-palmitoyl cysteine moiety is linked to residue Cys23. Residue Cys23 is the site of S-diacylglycerol cysteine attachment. The segment at 43–68 is disordered; sequence SQNPTSASSTSTSSATTTSSAPVEED. A compositionally biased stretch (low complexity) spans 47-63; that stretch reads TSASSTSTSSATTTSSA.

It is found in the cell membrane. In terms of biological role, is necessary for biosynthesis of the 4-methyl-5-(beta-hydroxyethyl)thiazol component from which thiamine is formed. This is Thiamine biosynthesis protein X (thiX) from Corynebacterium glutamicum (strain ATCC 13032 / DSM 20300 / JCM 1318 / BCRC 11384 / CCUG 27702 / LMG 3730 / NBRC 12168 / NCIMB 10025 / NRRL B-2784 / 534).